A 178-amino-acid chain; its full sequence is Probable chorismate pyruvate-lyase (178 aa).

Substrate is bound by residues arginine 73, leucine 111, and glutamate 163.

Belongs to the UbiC family.

It localises to the cytoplasm. The catalysed reaction is chorismate = 4-hydroxybenzoate + pyruvate. The protein operates within cofactor biosynthesis; ubiquinone biosynthesis. Removes the pyruvyl group from chorismate, with concomitant aromatization of the ring, to provide 4-hydroxybenzoate (4HB) for the ubiquinone pathway. This chain is Probable chorismate pyruvate-lyase, found in Pseudomonas aeruginosa (strain UCBPP-PA14).